Consider the following 757-residue polypeptide: MEQANEKEEEERHEEAAGEKESFEESKEKAAEMSRKEKRKAMKKLKRKQVRKEIAAKEREEAKAKLNDPAEQERLKAIEEEDARRREKELKDFEESERAWREAMEIKRKKEEEEEAKREEEERRWKDLEELRKLEASGNDECGEDEDGEYEYIEEGPPEIIFQGNEIILKKNKVRVPKKSVVQVDGHESSNAEFVLQISDRPTSNPLPPGSEASANYQNVSSAQQILESVAQEVPNFGTEQDKAHCPFHLKTGACRFGQRCSRVHFYPNKSCTLLMKNMYNGPGITWEQDEGLEYTDEEAELCYEEFYEDVHTEFLKYGELVNFKVCRNGSFHLKGNVYVHYRSLESAILAYQSINGRYFAGKQVNCEFVNISRWKVAICGEYMKSRLKTCSRGSACNFIHCFRNPGGDYEWADHDRPPPRFWIHKMTSLFGYSDEKHMEHESSGSLNDSISDLSTDSHRQPSRRSRSRDHDHANVGSTPSYRSRKYHGDTQDSTREDKLRRHAENCHDGDDSPSRDGSLEREMYKERRYAKDTLHRDSRWSEHSPGHRVGRKRIHGRYSDDDSADGDDYGRRGTGHKRKPRRGTDSGVQEQMDNEKDRKTHRSSRKHSREGSSADKEEGHEHDRVHTVSDKSHRERSKHRHERSSSRYSHEEDSTESRHHQHKESDKKRSVETSPVGYQSDKDRDRSKQRQRYKSDDPESDQSRKGKRQSEENSDRETHKERRHRHRKRRRTQNSDDQNPKESEEVEEEIERWRPV.

The tract at residues 1–127 (MEQANEKEEE…REEEERRWKD (127 aa)) is disordered. The segment covering 13 to 35 (HEEAAGEKESFEESKEKAAEMSR) has biased composition (basic and acidic residues). Residues 36-50 (KEKRKAMKKLKRKQV) are compositionally biased toward basic residues. The span at 51–127 (RKEIAAKERE…REEEERRWKD (77 aa)) shows a compositional bias: basic and acidic residues. The segment at 240-268 (EQDKAHCPFHLKTGACRFGQRCSRVHFYP) adopts a C3H1-type 1 zinc-finger fold. The region spanning 295 to 372 (YTDEEAELCY…KQVNCEFVNI (78 aa)) is the RRM domain. Residues 374–404 (RWKVAICGEYMKSRLKTCSRGSACNFIHCFR) form a C3H1-type 2 zinc finger. Residues 441-757 (HESSGSLNDS…EEEIERWRPV (317 aa)) form a disordered region. The span at 444 to 455 (SGSLNDSISDLS) shows a compositional bias: polar residues. Positions 487 to 546 (YHGDTQDSTREDKLRRHAENCHDGDDSPSRDGSLEREMYKERRYAKDTLHRDSRWSEHSP) are enriched in basic and acidic residues. Basic residues-rich tracts occupy residues 547-557 (GHRVGRKRIHG) and 600-609 (KTHRSSRKHS). Composition is skewed to basic and acidic residues over residues 610 to 634 (REGS…DKSH), 644 to 672 (RSSS…KRSV), and 681 to 721 (SDKD…ETHK). Over residues 722 to 733 (ERRHRHRKRRRT) the composition is skewed to basic residues.

The protein is Zinc finger CCCH domain-containing protein 5 of Arabidopsis thaliana (Mouse-ear cress).